A 1920-amino-acid polypeptide reads, in one-letter code: rRNA biogenesis protein RRP5 (1920 aa).

The interval 1–65 (MVVPQKKFAN…GTSLSKKERE (65 aa)) is disordered. 15 S1 motif domains span residues 128 to 210 (GMKL…LSLR), 226 to 291 (GMVF…LSSD), 314 to 384 (GMMV…LTLS), 400 to 473 (GDIF…GTLK), 490 to 557 (GMVT…VTYK), 577 to 646 (GLVT…LSFM), 661 to 733 (GSIV…LSSK), 753 to 822 (NSVV…LSLK), 866 to 930 (GSLI…LSLR), 958 to 1031 (EVHQ…LLLD), 1054 to 1129 (GSVV…LSVK), 1153 to 1224 (GQCV…LVQR), 1260 to 1334 (GDIL…LSLR), 1369 to 1438 (DMGV…VTLK), and 1459 to 1529 (GDMI…LGMK). Disordered regions lie at residues 1535 to 1555 (NGDD…ECDP) and 1605 to 1652 (TDFD…LEHH). Residues 1620 to 1652 (NKDEKSKRREKQKDKEEREKKIQAAEGRLLEHH) show a composition bias toward basic and acidic residues. 6 HAT repeats span residues 1651–1683 (HHAP…FMLS), 1685–1722 (ADIE…LENE), 1726–1758 (PPEE…YERT), 1759–1791 (EQYK…SSLK), 1828–1860 (GVAD…QEIR), and 1862–1897 (GEDD…YEKS).

Highly expressed in flowers and at lower levels in roots, leaves, stems and siliques.

It localises to the nucleus. It is found in the nucleolus. Involved in the biogenesis of ribosomal RNA (rRNA). Required for the formation of 5.8S rRNA. Required for normal development of female gametophytes. This chain is rRNA biogenesis protein RRP5, found in Arabidopsis thaliana (Mouse-ear cress).